A 503-amino-acid polypeptide reads, in one-letter code: Lysine--tRNA ligase (503 aa).

Positions 23 to 31 (PSGPIHVGN) match the 'HIGH' region motif. The 'KMSKS' region motif lies at 267–271 (AMHSS).

It belongs to the class-I aminoacyl-tRNA synthetase family.

Its subcellular location is the cytoplasm. The enzyme catalyses tRNA(Lys) + L-lysine + ATP = L-lysyl-tRNA(Lys) + AMP + diphosphate. The chain is Lysine--tRNA ligase from Thermoplasma volcanium (strain ATCC 51530 / DSM 4299 / JCM 9571 / NBRC 15438 / GSS1).